Here is a 280-residue protein sequence, read N- to C-terminus: Probable formate transporter (280 aa).

Transmembrane regions (helical) follow at residues 33 to 49 (LSFV…LLAE), 67 to 83 (LVFG…VVIA), 116 to 133 (SWVF…VLAY), 177 to 195 (FWRA…YLAV), 204 to 219 (SFGI…CIGF), and 253 to 272 (LGNI…FTYL).

The protein belongs to the FNT transporter (TC 1.A.16) family.

It is found in the cell membrane. May act as a formate transporter. The protein is Probable formate transporter (fdhC) of Methanobacterium formicicum.